We begin with the raw amino-acid sequence, 478 residues long: Aspartyl/glutamyl-tRNA(Asn/Gln) amidotransferase subunit B 2 (478 aa).

Belongs to the GatB/GatE family. GatB subfamily. Heterotrimer of A, B and C subunits.

The catalysed reaction is L-glutamyl-tRNA(Gln) + L-glutamine + ATP + H2O = L-glutaminyl-tRNA(Gln) + L-glutamate + ADP + phosphate + H(+). The enzyme catalyses L-aspartyl-tRNA(Asn) + L-glutamine + ATP + H2O = L-asparaginyl-tRNA(Asn) + L-glutamate + ADP + phosphate + 2 H(+). In terms of biological role, allows the formation of correctly charged Asn-tRNA(Asn) or Gln-tRNA(Gln) through the transamidation of misacylated Asp-tRNA(Asn) or Glu-tRNA(Gln) in organisms which lack either or both of asparaginyl-tRNA or glutaminyl-tRNA synthetases. The reaction takes place in the presence of glutamine and ATP through an activated phospho-Asp-tRNA(Asn) or phospho-Glu-tRNA(Gln). In Clostridium acetobutylicum (strain ATCC 824 / DSM 792 / JCM 1419 / IAM 19013 / LMG 5710 / NBRC 13948 / NRRL B-527 / VKM B-1787 / 2291 / W), this protein is Aspartyl/glutamyl-tRNA(Asn/Gln) amidotransferase subunit B 2 (gatB2).